The sequence spans 102 residues: Thioredoxin (102 aa).

One can recognise a Thioredoxin domain in the interval 1-102 (MVKVVSAENF…SLIRLINQHS (102 aa)). A disulfide bridge connects residues cysteine 28 and cysteine 31.

The protein belongs to the thioredoxin family.

In terms of biological role, participates in various redox reactions through the reversible oxidation of its active center dithiol to a disulfide and catalyzes dithiol-disulfide exchange reactions. The chain is Thioredoxin (trxA) from Chlamydia caviae (strain ATCC VR-813 / DSM 19441 / 03DC25 / GPIC) (Chlamydophila caviae).